The following is a 359-amino-acid chain: Probable mannitol dehydrogenase (359 aa).

Residues Cys50, His72, Cys103, Cys106, Cys109, Cys117, and Cys165 each contribute to the Zn(2+) site.

This sequence belongs to the zinc-containing alcohol dehydrogenase family. Zn(2+) serves as cofactor.

It carries out the reaction D-mannitol + NAD(+) = D-mannose + NADH + H(+). Functionally, oxidizes mannitol to mannose. Provides the initial step by which translocated mannitol is committed to central metabolism and, by regulating mannitol pool size, is important in regulating salt tolerance at the cellular level. The polypeptide is Probable mannitol dehydrogenase (CAD1) (Medicago sativa (Alfalfa)).